A 257-amino-acid polypeptide reads, in one-letter code: Cytochrome c oxidase subunit 3 (257 aa).

6 helical membrane-spanning segments follow: residues 13-33 (PWPITSSISALSLTLGFVSYF), 36-56 (LSMYLILLAVLMITISSFQWW), 80-100 (GMILFILSEVFFFVSFFWAFF), 154-174 (YISALNSLLITILLGVAFTMF), 195-215 (FFMTTGFHGLHVLIGSIFLLV), and 237-257 (AWYWHFVDVVWLFLFTFMYWW).

It belongs to the cytochrome c oxidase subunit 3 family. As to quaternary structure, component of the cytochrome c oxidase (complex IV, CIV), a multisubunit enzyme composed of a catalytic core of 3 subunits and several supernumerary subunits. The complex exists as a monomer or a dimer and forms supercomplexes (SCs) in the inner mitochondrial membrane with ubiquinol-cytochrome c oxidoreductase (cytochrome b-c1 complex, complex III, CIII).

The protein localises to the mitochondrion inner membrane. It carries out the reaction 4 Fe(II)-[cytochrome c] + O2 + 8 H(+)(in) = 4 Fe(III)-[cytochrome c] + 2 H2O + 4 H(+)(out). Its function is as follows. Component of the cytochrome c oxidase, the last enzyme in the mitochondrial electron transport chain which drives oxidative phosphorylation. The respiratory chain contains 3 multisubunit complexes succinate dehydrogenase (complex II, CII), ubiquinol-cytochrome c oxidoreductase (cytochrome b-c1 complex, complex III, CIII) and cytochrome c oxidase (complex IV, CIV), that cooperate to transfer electrons derived from NADH and succinate to molecular oxygen, creating an electrochemical gradient over the inner membrane that drives transmembrane transport and the ATP synthase. Cytochrome c oxidase is the component of the respiratory chain that catalyzes the reduction of oxygen to water. Electrons originating from reduced cytochrome c in the intermembrane space (IMS) are transferred via the dinuclear copper A center (CU(A)) of subunit 2 and heme A of subunit 1 to the active site in subunit 1, a binuclear center (BNC) formed by heme A3 and copper B (CU(B)). The BNC reduces molecular oxygen to 2 water molecules using 4 electrons from cytochrome c in the IMS and 4 protons from the mitochondrial matrix. The sequence is that of Cytochrome c oxidase subunit 3 (COIII) from Rhipicephalus sanguineus (Brown dog tick).